Here is a 376-residue protein sequence, read N- to C-terminus: Zinc finger CCCH domain-containing protein C337.12 (376 aa).

Residues 2–25 (NEQQLLENIASLAGAINQYKNEKE) adopt a coiled-coil conformation. The disordered stretch occupies residues 60-95 (SKSTAASPPYVIPSTSSNADDANKEPEKQSTSDYVS). Basic and acidic residues predominate over residues 80–89 (DANKEPEKQS). The stretch at 105–140 (KKNILEHDLQARKANLESYRAKLEKEYKTLAENKIQ) forms a coiled coil. 4 consecutive C3H1-type zinc fingers follow at residues 202 to 228 (SPSA…FVHE), 229 to 256 (PTRK…HELD), 257 to 283 (PRRI…HIHY), and 284 to 312 (SENA…HILQ). Residues 347–376 (SKTAGSINPEDSGSEIGSNSLESNLDFISV) are disordered. The span at 349-369 (TAGSINPEDSGSEIGSNSLES) shows a compositional bias: polar residues.

The protein localises to the nucleus. In Schizosaccharomyces pombe (strain 972 / ATCC 24843) (Fission yeast), this protein is Zinc finger CCCH domain-containing protein C337.12.